We begin with the raw amino-acid sequence, 444 residues long: Orexin receptor type 2 (444 aa).

The segment covering 1 to 10 (MSGTKLEDSP) has biased composition (basic and acidic residues). Positions 1–30 (MSGTKLEDSPPCRNWSSAPELNETQEPFLN) are disordered. Over 1 to 54 (MSGTKLEDSPPCRNWSSAPELNETQEPFLNPTDYDDEEFLRYLWREYLHPKEYE) the chain is Extracellular. 2 N-linked (GlcNAc...) asparagine glycosylation sites follow: asparagine 14 and asparagine 22. Over residues 14–27 (NWSSAPELNETQEP) the composition is skewed to polar residues. Residues 33–49 (DYDDEEFLRYLWREYLH) are required for response to orexin-A. The helical transmembrane segment at 55–75 (WVLIAGYIIVFVVALIGNVLV) threads the bilayer. The Cytoplasmic portion of the chain corresponds to 76–88 (CVAVWKNHHMRTV). A helical transmembrane segment spans residues 89 to 110 (TNYFIVNLSLADVLVTITCLPA). Residues 111–127 (TLVVDITETWFFGQSLC) lie on the Extracellular side of the membrane. Cysteines 127 and 210 form a disulfide. Residues 128–150 (KVIPYLQTVSVSVSVLTLSCIAL) traverse the membrane as a helical segment. The Cytoplasmic segment spans residues 151-170 (DRWYAICHPLMFKSTAKRAR). A helical membrane pass occupies residues 171-191 (NSIVIIWIVSCIIMIPQAIVM). Residues 192 to 222 (ECSTMLPGLANKTTLFTVCDERWGGEIYPKM) lie on the Extracellular side of the membrane. A glycan (N-linked (GlcNAc...) asparagine) is linked at asparagine 202. Residues 223–243 (YHICFFLVTYMAPLCLMVLAY) form a helical membrane-spanning segment. Residues 244 to 304 (LQIFRKLWCR…QIRARRKTAR (61 aa)) are Cytoplasmic-facing. The helical transmembrane segment at 305 to 326 (MLMVVLLVFAICYLPISILNVL) threads the bilayer. Residues 327 to 342 (KRVFGMFTHTEDRETV) are Extracellular-facing. Residues 343 to 366 (YAWFTFSHWLVYANSAANPIIYNF) traverse the membrane as a helical segment. At 367–444 (LSGKFREEFK…ANGAGQLQNW (78 aa)) the chain is on the cytoplasmic side.

The protein belongs to the G-protein coupled receptor 1 family.

The protein localises to the cell membrane. Functionally, nonselective, high-affinity receptor for both orexin-A and orexin-B neuropeptides. Triggers an increase in cytoplasmic Ca(2+) levels in response to orexin-A binding. The sequence is that of Orexin receptor type 2 (HCRTR2) from Sus scrofa (Pig).